Reading from the N-terminus, the 389-residue chain is Lipopolysaccharide assembly protein B (389 aa).

A helical membrane pass occupies residues 1–20 (MLELLFLLLPVAAAYGWYMG). At 21–389 (RRSAQQNKQD…IKPIRGLDGL (369 aa)) the chain is on the cytoplasmic side. TPR repeat units follow at residues 35–68 (LSRD…DTGT), 69–102 (VEAH…ASLT), 107–140 (LLAI…TDFR), 142–174 (GALQ…GKDK), 180–213 (AHFY…DKNS), 214–247 (ARVS…DREL), and 249–282 (SETL…NTGA). Fe cation-binding residues include Cys-357, Cys-360, Cys-371, and Cys-374.

Belongs to the LapB family.

It localises to the cell inner membrane. Functionally, modulates cellular lipopolysaccharide (LPS) levels by regulating LpxC, which is involved in lipid A biosynthesis. May act by modulating the proteolytic activity of FtsH towards LpxC. May also coordinate assembly of proteins involved in LPS synthesis at the plasma membrane. The chain is Lipopolysaccharide assembly protein B from Escherichia coli O157:H7.